Consider the following 141-residue polypeptide: Histone H2B (141 aa).

Positions 1–10 are enriched in basic and acidic residues; it reads MPPKAAEKKP. Residues 1–49 form a disordered region; the sequence is MPPKAAEKKPSTGGKAPAGGKAPAEKKEAGKKTAAAASGDKKKRGKTRK. Lys-8 and Lys-9 each carry N6-acetyllysine; alternate. Residues Lys-8 and Lys-9 each participate in a glycyl lysine isopeptide (Lys-Gly) (interchain with G-Cter in SUMO); alternate cross-link. Low complexity predominate over residues 11–22; it reads STGGKAPAGGKA. Lys-15 carries the N6-acetyllysine modification. Residue Lys-26 is modified to N6-acetyllysine; alternate. A Glycyl lysine isopeptide (Lys-Gly) (interchain with G-Cter in SUMO); alternate cross-link involves residue Lys-26. Lys-27 participates in a covalent cross-link: Glycyl lysine isopeptide (Lys-Gly) (interchain with G-Cter in SUMO). Lys-135 is covalently cross-linked (Glycyl lysine isopeptide (Lys-Gly) (interchain with G-Cter in ubiquitin)).

It belongs to the histone H2B family. The nucleosome is a histone octamer containing two molecules each of H2A, H2B, H3 and H4 assembled in one H3-H4 heterotetramer and two H2A-H2B heterodimers. The octamer wraps approximately 147 bp of DNA. In terms of processing, monoubiquitinated by the ubc2-bre1 complex to form H2BK123ub1. H2BK123ub1 gives a specific tag for epigenetic transcriptional activation and is also prerequisite for H3K4me and H3K79me formation. H2BK123ub1 also modulates the formation of double-strand breaks during meiosis and is a prerequisite for DNA-damage checkpoint activation. Acetylated by gcn5 to form H2BK11ac and H2BK16ac. H2BK16ac can also be formed by esa1. Acetylation of N-terminal lysines and particularly formation of H2BK11acK16ac has a positive effect on transcription. Post-translationally, sumoylation to form H2BK6su or H2BK7su, and probably also H2BK16su or H2BK17su, occurs preferentially near the telomeres and represses gene transcription.

The protein resides in the nucleus. It localises to the chromosome. Functionally, core component of nucleosome. Nucleosomes wrap and compact DNA into chromatin, limiting DNA accessibility to the cellular machineries which require DNA as a template. Histones thereby play a central role in transcription regulation, DNA repair, DNA replication and chromosomal stability. DNA accessibility is regulated via a complex set of post-translational modifications of histones, also called histone code, and nucleosome remodeling. This chain is Histone H2B (htb1), found in Aspergillus niger (strain ATCC MYA-4892 / CBS 513.88 / FGSC A1513).